Here is a 290-residue protein sequence, read N- to C-terminus: Potassium-transporting ATPase subunit beta (290 aa).

Residues 1-36 (MAALQEKKSCSQRMEEFQRYCWNPDTGQMLGRTLSR) lie on the Cytoplasmic side of the membrane. Residues 37 to 57 (WVWISLYYVAFYVVMTGIFAL) traverse the membrane as a helical; Signal-anchor for type II membrane protein segment. Topologically, residues 58 to 290 (CIYTLMCTLD…KVEFKLTIQQ (233 aa)) are extracellular. Asn99, Asn103, Asn130, Asn146, and Asn161 each carry an N-linked (GlcNAc...) asparagine glycan. A disulfide bridge connects residues Cys131 and Cys152. Cys162 and Cys178 are disulfide-bonded. Residues Asn193 and Asn221 are each glycosylated (N-linked (GlcNAc...) asparagine). The interval 194–290 (STAPRADCTF…KVEFKLTIQQ (97 aa)) is immunoglobulin-like. Cys201 and Cys262 form a disulfide bridge.

Belongs to the X(+)/potassium ATPases subunit beta family. In terms of assembly, the ATPase pump is composed of two subunits: alpha (catalytic) and beta (regulatory). Interacts with alpha subunit ATP12A; this interaction is required for the formation of a functionally active pump and targeting at the plasma membrane. Interacts (via N-terminus) with alpha subunit ATP4A (via the P-domain). Post-translationally, N-glycosylation is necessary for assembly and functional expression of the pump at the plasma membrane.

It is found in the apical cell membrane. The protein resides in the cell membrane. The beta subunit of the gastric H(+)/K(+) ATPase pump which transports H(+) ions in exchange for K(+) ions across the apical membrane of parietal cells. Plays a structural and regulatory role in the assembly and membrane targeting of a functionally active pump. Within a transport cycle, the transfer of a H(+) ion across the membrane is coupled to ATP hydrolysis and is associated with a transient phosphorylation of the alpha subunit that shifts the pump conformation from inward-facing (E1) to outward-facing state (E2). Interacts with the phosphorylation domain of the alpha subunit and functions as a ratchet, stabilizing the lumenal-open E2 conformation and preventing the reverse reaction of the transport cycle. The polypeptide is Potassium-transporting ATPase subunit beta (ATP4B) (Canis lupus familiaris (Dog)).